A 513-amino-acid polypeptide reads, in one-letter code: ATP synthase subunit alpha (513 aa).

171-178 is a binding site for ATP; the sequence is GDRQIGKT.

The protein belongs to the ATPase alpha/beta chains family. In terms of assembly, F-type ATPases have 2 components, CF(1) - the catalytic core - and CF(0) - the membrane proton channel. CF(1) has five subunits: alpha(3), beta(3), gamma(1), delta(1), epsilon(1). CF(0) has three main subunits: a(1), b(2) and c(9-12). The alpha and beta chains form an alternating ring which encloses part of the gamma chain. CF(1) is attached to CF(0) by a central stalk formed by the gamma and epsilon chains, while a peripheral stalk is formed by the delta and b chains.

It localises to the cell inner membrane. It carries out the reaction ATP + H2O + 4 H(+)(in) = ADP + phosphate + 5 H(+)(out). Produces ATP from ADP in the presence of a proton gradient across the membrane. The alpha chain is a regulatory subunit. The polypeptide is ATP synthase subunit alpha (Wolbachia sp. subsp. Drosophila simulans (strain wRi)).